The sequence spans 759 residues: LPS-assembly protein LptD (759 aa).

The N-terminal stretch at Met1–Ala22 is a signal peptide.

This sequence belongs to the LptD family. Component of the lipopolysaccharide transport and assembly complex. Interacts with LptE and LptA.

It is found in the cell outer membrane. In terms of biological role, together with LptE, is involved in the assembly of lipopolysaccharide (LPS) at the surface of the outer membrane. The chain is LPS-assembly protein LptD from Alcanivorax borkumensis (strain ATCC 700651 / DSM 11573 / NCIMB 13689 / SK2).